A 590-amino-acid chain; its full sequence is Enhancer of polycomb-like protein 1 (590 aa).

2 disordered regions span residues 302–335 (DEDL…PVRS) and 471–497 (TPPR…EPPV). A compositionally biased stretch (basic and acidic residues) spans 475-488 (ELGEDRSDRWKYDS).

It belongs to the enhancer of polycomb family. As to quaternary structure, component of the NuA4 histone acetyltransferase complex.

It is found in the nucleus. In terms of biological role, component of the NuA4 histone acetyltransferase complex which is involved in transcriptional activation of selected genes principally by acetylation of nucleosomal histone H4 and H2A. The NuA4 complex is also involved in DNA repair. Involved in gene silencing by neighboring heterochromatin, blockage of the silencing spreading along the chromosome, and required for cell cycle progression through G2/M. The polypeptide is Enhancer of polycomb-like protein 1 (EPL1) (Gibberella zeae (strain ATCC MYA-4620 / CBS 123657 / FGSC 9075 / NRRL 31084 / PH-1) (Wheat head blight fungus)).